A 341-amino-acid polypeptide reads, in one-letter code: MIILGIESSCDETSIAVVKDGKEILSNNISSQIEIHKEYGGVVPEIASRQHIKNIATVLEESLEEAKITLDDVDYIAVTYAPGLIGALLVGVSFAKGLSYAKNIPIIPVHHIKGHMYANFLEHDVELPCISLVVSGGHTNIIYIDENHNFINIGETLDDAVGESCDKVARVLGLGYPGGPVIDKMYYKGDRDFLKITKPKVSRFDFSFSGIKTAIINFDNNMKMKNQEYKKEDLAASFLGTVVDILCDKTLNAAVEKNVKTIMLAGGVAANSLLRSQLTEKAAEKGIKVIYPSMKLCTDNAAMIAEAAYYKLKNAKNEKDCFAGLDLNGVASLMVSDEKAI.

H111 and H115 together coordinate Fe cation. Substrate-binding positions include 133-137 (VVSGG), D166, G179, D183, and N271. Residue D299 coordinates Fe cation.

This sequence belongs to the KAE1 / TsaD family. Fe(2+) is required as a cofactor.

Its subcellular location is the cytoplasm. It carries out the reaction L-threonylcarbamoyladenylate + adenosine(37) in tRNA = N(6)-L-threonylcarbamoyladenosine(37) in tRNA + AMP + H(+). In terms of biological role, required for the formation of a threonylcarbamoyl group on adenosine at position 37 (t(6)A37) in tRNAs that read codons beginning with adenine. Is involved in the transfer of the threonylcarbamoyl moiety of threonylcarbamoyl-AMP (TC-AMP) to the N6 group of A37, together with TsaE and TsaB. TsaD likely plays a direct catalytic role in this reaction. This is tRNA N6-adenosine threonylcarbamoyltransferase from Fusobacterium nucleatum subsp. nucleatum (strain ATCC 25586 / DSM 15643 / BCRC 10681 / CIP 101130 / JCM 8532 / KCTC 2640 / LMG 13131 / VPI 4355).